Consider the following 155-residue polypeptide: uncharacterized protein (155 aa).

The segment at 135 to 155 is disordered; it reads SQANSKNDSNSKDDLPNPFSV.

This is an uncharacterized protein from Acidianus convivator (ATV).